The primary structure comprises 86 residues: Alpha-toxin TbTx5 (86 aa).

Positions 1 to 19 (MNDFVFLVVACLLTAGTEG) are cleaved as a signal peptide. In terms of domain architecture, LCN-type CS-alpha/beta spans 21–82 (KDGYPVEGDN…EPTKTNGRCK (62 aa)). Cystine bridges form between C31-C81, C35-C57, C43-C64, and C47-C66. P83 carries the proline amide modification.

This sequence belongs to the long (4 C-C) scorpion toxin superfamily. Sodium channel inhibitor family. Alpha subfamily. Expressed by the venom gland.

It localises to the secreted. Its function is as follows. Alpha toxins bind voltage-independently at site-3 of sodium channels (Nav) and inhibit the inactivation of the activated channels, thereby blocking neuronal transmission. This Tityus bahiensis (Brazilian scorpion) protein is Alpha-toxin TbTx5.